Consider the following 435-residue polypeptide: Putative magnesium transporter MRS2-H (435 aa).

A disordered region spans residues 19-54 (FSSSPESRRCRSVHRVPSRPRPPLAPPARVMGKGNS). 2 helical membrane-spanning segments follow: residues 369 to 389 (LTLI…AAFA) and 408 to 428 (FVGA…TYAW).

It belongs to the CorA metal ion transporter (MIT) (TC 1.A.35.5) family.

It is found in the membrane. Putative magnesium transporter. This Oryza sativa subsp. indica (Rice) protein is Putative magnesium transporter MRS2-H (MRS2-H).